The primary structure comprises 366 residues: 5-formaminoimidazole-4-carboxamide-1-(beta)-D-ribofuranosyl 5'-monophosphate synthetase (366 aa).

Positions 27 and 96 each coordinate 5-amino-1-(5-phospho-beta-D-ribosyl)imidazole-4-carboxamide. The ATP-grasp domain occupies 131-357; that stretch reads RKWLEDAGVP…IAREIKEAVK (227 aa). ATP contacts are provided by residues 154 to 208 and E239; that span reads PVIV…VRFY. Residue N263 coordinates 5-amino-1-(5-phospho-beta-D-ribosyl)imidazole-4-carboxamide. E302 and E315 together coordinate Mg(2+).

This sequence belongs to the phosphohexose mutase family. Mg(2+) serves as cofactor. The cofactor is Mn(2+).

The enzyme catalyses 5-amino-1-(5-phospho-beta-D-ribosyl)imidazole-4-carboxamide + formate + ATP = 5-formamido-1-(5-phospho-D-ribosyl)imidazole-4-carboxamide + ADP + phosphate. The protein operates within purine metabolism; IMP biosynthesis via de novo pathway; 5-formamido-1-(5-phospho-D-ribosyl)imidazole-4-carboxamide from 5-amino-1-(5-phospho-D-ribosyl)imidazole-4-carboxamide (formate route): step 1/1. In terms of biological role, catalyzes the ATP- and formate-dependent formylation of 5-aminoimidazole-4-carboxamide-1-beta-d-ribofuranosyl 5'-monophosphate (AICAR) to 5-formaminoimidazole-4-carboxamide-1-beta-d-ribofuranosyl 5'-monophosphate (FAICAR) in the absence of folates. This Korarchaeum cryptofilum (strain OPF8) protein is 5-formaminoimidazole-4-carboxamide-1-(beta)-D-ribofuranosyl 5'-monophosphate synthetase.